Consider the following 130-residue polypeptide: MSMQDPLADMLTRIRNAQMAEKTVVSMPSSKLKAAVAKVLKDEGYIADFQISSEVKPQLSIELKYFEGKPVIEEVKRISRPGLRQYKSVEQLPKVRGGLGVSIVSTNKGVMTDRAARAAGVGGEVLCTVF.

The protein belongs to the universal ribosomal protein uS8 family. As to quaternary structure, part of the 30S ribosomal subunit. Contacts proteins S5 and S12.

Its function is as follows. One of the primary rRNA binding proteins, it binds directly to 16S rRNA central domain where it helps coordinate assembly of the platform of the 30S subunit. The chain is Small ribosomal subunit protein uS8 from Pseudomonas aeruginosa (strain UCBPP-PA14).